The primary structure comprises 167 residues: Lipoprotein signal peptidase (167 aa).

3 helical membrane passes run Ala-9–Leu-29, Leu-68–Tyr-88, and Met-98–Val-118. Catalysis depends on residues Asp-120 and Asp-138. A helical membrane pass occupies residues Tyr-130–Leu-150.

The protein belongs to the peptidase A8 family.

The protein resides in the cell inner membrane. It carries out the reaction Release of signal peptides from bacterial membrane prolipoproteins. Hydrolyzes -Xaa-Yaa-Zaa-|-(S,diacylglyceryl)Cys-, in which Xaa is hydrophobic (preferably Leu), and Yaa (Ala or Ser) and Zaa (Gly or Ala) have small, neutral side chains.. The protein operates within protein modification; lipoprotein biosynthesis (signal peptide cleavage). Functionally, this protein specifically catalyzes the removal of signal peptides from prolipoproteins. The polypeptide is Lipoprotein signal peptidase (Aquifex aeolicus (strain VF5)).